A 242-amino-acid chain; its full sequence is Ubiquinone biosynthesis O-methyltransferase (242 aa).

S-adenosyl-L-methionine-binding residues include arginine 44, glycine 64, aspartate 85, and methionine 129.

It belongs to the methyltransferase superfamily. UbiG/COQ3 family.

The catalysed reaction is a 3-demethylubiquinol + S-adenosyl-L-methionine = a ubiquinol + S-adenosyl-L-homocysteine + H(+). The enzyme catalyses a 3-(all-trans-polyprenyl)benzene-1,2-diol + S-adenosyl-L-methionine = a 2-methoxy-6-(all-trans-polyprenyl)phenol + S-adenosyl-L-homocysteine + H(+). Its pathway is cofactor biosynthesis; ubiquinone biosynthesis. O-methyltransferase that catalyzes the 2 O-methylation steps in the ubiquinone biosynthetic pathway. This Salmonella arizonae (strain ATCC BAA-731 / CDC346-86 / RSK2980) protein is Ubiquinone biosynthesis O-methyltransferase.